A 196-amino-acid polypeptide reads, in one-letter code: [1-hydroxy-2-(trimethylamino)ethyl]phosphonate dioxygenase (glycine-betaine-forming) (196 aa).

Tyr30 contributes to the [(1R)-1-hydroxy-2-(trimethylamino)ethyl]phosphonate binding site. Residues Tyr30, His40, His64, and Asp65 each contribute to the Fe cation site. The region spanning 37-156 (MAEHMLQGAT…VAEFEKNPNL (120 aa)) is the HD domain. [(1R)-1-hydroxy-2-(trimethylamino)ethyl]phosphonate contacts are provided by His68, His86, His109, Lys113, Ser131, Ser134, and Arg163. Positions 86 and 109 each coordinate Fe cation. Residue Asp166 participates in Fe cation binding.

Requires Fe cation as cofactor.

It carries out the reaction [(1R)-1-hydroxy-2-(trimethylamino)ethyl]phosphonate + O2 = glycine betaine + phosphate + 2 H(+). Functionally, involved in the degradation of the naturally occurring organophosphonate 2-(trimethylammonio)ethylphosphonate (TMAEP). Catalyzes the O(2)-dependent cleavage of (R)-1-hydroxy-2-(trimethylammonio)ethylphosphonate (OH-TMAEP) to yield glycine betaine and phosphate. Is highly specific for its N-trimethylated substrate. In Leisingera caerulea (Phaeobacter caeruleus), this protein is [1-hydroxy-2-(trimethylamino)ethyl]phosphonate dioxygenase (glycine-betaine-forming).